The primary structure comprises 153 residues: MQEAVTSKVEEVAQRVAQSEGLELVEVEVKGGGSARLVRISIDKPEGVTHADCQTVSDKVGEILEAEDAIPGHYTLEVSSPGVERKLLKPQDYQRFHGQKAKITVREEVDGRRTWEGTLAGFADGVISLEVAPGEIRRLPFDQVKKANLKFEW.

It belongs to the RimP family.

The protein localises to the cytoplasm. Required for maturation of 30S ribosomal subunits. In Solibacter usitatus (strain Ellin6076), this protein is Ribosome maturation factor RimP.